A 517-amino-acid polypeptide reads, in one-letter code: Variant surface glycoprotein MVAT5 (517 aa).

The first 21 residues, 1-21 (MIGKAFIILSLLNELPTPTAA), serve as a signal peptide directing secretion. Cystine bridges form between C417-C430 and C426-C443. The N-linked (GlcNAc...) asparagine glycan is linked to N435. Residues 454 to 470 (QAAQTAGAGEGAAGTTT) are compositionally biased toward low complexity. The interval 454–487 (QAAQTAGAGEGAAGTTTDKCKDKKKDDCKSPDCK) is disordered. Residues 471 to 487 (DKCKDKKKDDCKSPDCK) are compositionally biased toward basic and acidic residues. Residue D495 is the site of GPI-anchor amidated aspartate attachment. A propeptide spans 496–517 (SSILLNKQFALMVSAAFVALLF) (removed in mature form).

Its subcellular location is the cell membrane. Its function is as follows. VSG forms a coat on the surface of the parasite. The trypanosome evades the immune response of the host by expressing a series of antigenically distinct VSGs from an estimated 1000 VSG genes. This chain is Variant surface glycoprotein MVAT5, found in Trypanosoma brucei rhodesiense.